We begin with the raw amino-acid sequence, 323 residues long: MSRLLRVYVDGPHGLGKTTAASALASERGDAIYLPEPMSYWSGAGEDDLVARVYTAQHRMDRGEIDAREAAGVVLGAQLTMSTPYVALNGLIAPHIGEEPSPGNATPPDLILIFDRHPIASLLCYPLARYLTRCLPIESVLSLIALIPPTPPGTNLILGTAPAEDHLSRLVARGRPGELPDARMLRAIRYVYALLANTVKYLQSGGSWRADLGSEPPRLPLAPPEIGDPNNPGGHNTLLALIHGAGATRGCAAMTSWTLDLLADRLRSMNMFTVDYSAPPEACVAQMRNLLPSMQCTVTPKPESHRAVADAALAFMREMSNCK.

Position 11 to 18 (G11 to T18) interacts with ATP. E36 (proton acceptor) is an active-site residue. Positions 54 and 78 each coordinate substrate. Residue R169 participates in ATP binding. R175 is a binding site for substrate.

This sequence belongs to the herpesviridae thymidine kinase family. Homodimer.

It carries out the reaction thymidine + ATP = dTMP + ADP + H(+). Its function is as follows. Catalyzes the transfer of the gamma-phospho group of ATP to thymidine to generate dTMP in the salvage pathway of pyrimidine synthesis. The dTMP serves as a substrate for DNA polymerase during viral DNA replication. Allows the virus to be reactivated and to grow in non-proliferative cells lacking a high concentration of phosphorylated nucleic acid precursors. The sequence is that of Thymidine kinase from Bos taurus (Bovine).